Here is a 491-residue protein sequence, read N- to C-terminus: Probable cytosol aminopeptidase (491 aa).

Residues Lys264 and Asp269 each coordinate Mn(2+). The active site involves Lys276. Mn(2+) is bound by residues Asp287, Asp346, and Glu348. Arg350 is an active-site residue.

It belongs to the peptidase M17 family. It depends on Mn(2+) as a cofactor.

The protein resides in the cytoplasm. The catalysed reaction is Release of an N-terminal amino acid, Xaa-|-Yaa-, in which Xaa is preferably Leu, but may be other amino acids including Pro although not Arg or Lys, and Yaa may be Pro. Amino acid amides and methyl esters are also readily hydrolyzed, but rates on arylamides are exceedingly low.. The enzyme catalyses Release of an N-terminal amino acid, preferentially leucine, but not glutamic or aspartic acids.. In terms of biological role, presumably involved in the processing and regular turnover of intracellular proteins. Catalyzes the removal of unsubstituted N-terminal amino acids from various peptides. This chain is Probable cytosol aminopeptidase, found in Xylella fastidiosa (strain Temecula1 / ATCC 700964).